We begin with the raw amino-acid sequence, 136 residues long: Ig heavy chain V region BCL1 (136 aa).

The first 19 residues, 1-19 (MGWSCIIFFLVATATGVHS), serve as a signal peptide directing secretion. Residues 20-135 (QVQLQQSGPE…WGQGTTLTVS (116 aa)) form the Ig-like domain.

This Mus musculus (Mouse) protein is Ig heavy chain V region BCL1.